A 422-amino-acid polypeptide reads, in one-letter code: GTPase Obg (422 aa).

The region spanning 1–158 (MFYDRAKIYV…LWLELELKVI (158 aa)) is the Obg domain. The OBG-type G domain occupies 159–330 (ADVGLIGFPN…VIHRVAELLA (172 aa)). GTP-binding positions include 165–172 (GFPNAGKS), 190–194 (FTTLV), 212–215 (DIPG), 282–285 (NKMD), and 311–313 (SAA). The Mg(2+) site is built by serine 172 and threonine 192. An OCT domain is found at 344–422 (VMFEPEERFN…IGDWEFEWSE (79 aa)).

The protein belongs to the TRAFAC class OBG-HflX-like GTPase superfamily. OBG GTPase family. Monomer. It depends on Mg(2+) as a cofactor.

The protein resides in the cytoplasm. Its function is as follows. An essential GTPase which binds GTP, GDP and possibly (p)ppGpp with moderate affinity, with high nucleotide exchange rates and a fairly low GTP hydrolysis rate. Plays a role in control of the cell cycle, stress response, ribosome biogenesis and in those bacteria that undergo differentiation, in morphogenesis control. The protein is GTPase Obg of Desulforamulus reducens (strain ATCC BAA-1160 / DSM 100696 / MI-1) (Desulfotomaculum reducens).